The sequence spans 489 residues: Protein nucleotidyltransferase YdiU (489 aa).

Positions 88, 90, 91, 111, 123, 124, 174, and 181 each coordinate ATP. Asp250 functions as the Proton acceptor in the catalytic mechanism. Mg(2+)-binding residues include Asn251 and Asp260. Asp260 contributes to the ATP binding site.

It belongs to the SELO family. Mg(2+) is required as a cofactor. The cofactor is Mn(2+).

The enzyme catalyses L-seryl-[protein] + ATP = 3-O-(5'-adenylyl)-L-seryl-[protein] + diphosphate. It carries out the reaction L-threonyl-[protein] + ATP = 3-O-(5'-adenylyl)-L-threonyl-[protein] + diphosphate. It catalyses the reaction L-tyrosyl-[protein] + ATP = O-(5'-adenylyl)-L-tyrosyl-[protein] + diphosphate. The catalysed reaction is L-histidyl-[protein] + UTP = N(tele)-(5'-uridylyl)-L-histidyl-[protein] + diphosphate. The enzyme catalyses L-seryl-[protein] + UTP = O-(5'-uridylyl)-L-seryl-[protein] + diphosphate. It carries out the reaction L-tyrosyl-[protein] + UTP = O-(5'-uridylyl)-L-tyrosyl-[protein] + diphosphate. Its function is as follows. Nucleotidyltransferase involved in the post-translational modification of proteins. It can catalyze the addition of adenosine monophosphate (AMP) or uridine monophosphate (UMP) to a protein, resulting in modifications known as AMPylation and UMPylation. The sequence is that of Protein nucleotidyltransferase YdiU from Vibrio cholerae serotype O1 (strain ATCC 39315 / El Tor Inaba N16961).